Here is a 149-residue protein sequence, read N- to C-terminus: Transcriptional regulator MraZ (149 aa).

SpoVT-AbrB domains are found at residues 9-52 and 82-125; these read AYSY…PRAQ and AQEV…DRAR.

The protein belongs to the MraZ family. Forms oligomers.

The protein resides in the cytoplasm. Its subcellular location is the nucleoid. The polypeptide is Transcriptional regulator MraZ (Treponema pallidum subsp. pallidum (strain SS14)).